The sequence spans 348 residues: Tetraacyldisaccharide 4'-kinase (348 aa).

50 to 57 (TMGGTGKT) contacts ATP.

It belongs to the LpxK family.

The catalysed reaction is a lipid A disaccharide + ATP = a lipid IVA + ADP + H(+). The protein operates within glycolipid biosynthesis; lipid IV(A) biosynthesis; lipid IV(A) from (3R)-3-hydroxytetradecanoyl-[acyl-carrier-protein] and UDP-N-acetyl-alpha-D-glucosamine: step 6/6. Transfers the gamma-phosphate of ATP to the 4'-position of a tetraacyldisaccharide 1-phosphate intermediate (termed DS-1-P) to form tetraacyldisaccharide 1,4'-bis-phosphate (lipid IVA). In Desulfotalea psychrophila (strain LSv54 / DSM 12343), this protein is Tetraacyldisaccharide 4'-kinase.